A 444-amino-acid chain; its full sequence is Multidrug resistance protein MdtA (444 aa).

Positions 1–20 (MKSQSKRTSRLFVFVGVVVA) are cleaved as a signal peptide. Over residues 37 to 52 (NNTSGAQQSARGQDTS) the composition is skewed to polar residues. Disordered stretches follow at residues 37–60 (NNTSGAQQSARGQDTSHGGRRNTP) and 398–444 (TPRS…AEKS). Positions 409–419 (ASAEKAAAEAE) are enriched in low complexity. Residues 435 to 444 (ARSTTAAEKS) show a composition bias toward polar residues.

The protein belongs to the membrane fusion protein (MFP) (TC 8.A.1) family. As to quaternary structure, part of a tripartite efflux system composed of MdtA, MdtB and MdtC.

The protein localises to the cell inner membrane. This Yersinia pseudotuberculosis serotype O:3 (strain YPIII) protein is Multidrug resistance protein MdtA.